Here is a 202-residue protein sequence, read N- to C-terminus: uncharacterized protein (202 aa).

Positions 179–202 (FDEQDSTPELPPNYLLDSQKKSQG) are disordered.

This is an uncharacterized protein from Haemophilus influenzae (strain ATCC 51907 / DSM 11121 / KW20 / Rd).